The sequence spans 524 residues: Lysophospholipid acyltransferase LPCAT4 (524 aa).

2 consecutive transmembrane segments (helical) span residues 40–62 (CLLG…FLLW) and 87–107 (TVCH…LGFL). Residues 129–134 (HSTFFD) carry the HXXXXD motif motif. N-linked (GlcNAc...) asparagine glycosylation occurs at N152. Positions 489–524 (PPHTSRGTSQTPNASSPGNPTALANGTVQAPKQKGD) are disordered. Residues 493-518 (SRGTSQTPNASSPGNPTALANGTVQA) are compositionally biased toward polar residues.

This sequence belongs to the 1-acyl-sn-glycerol-3-phosphate acyltransferase family. In terms of tissue distribution, widely expressed with predominant level in brain.

The protein resides in the endoplasmic reticulum membrane. It carries out the reaction a 1-acyl-sn-glycero-3-phosphoethanolamine + an acyl-CoA = a 1,2-diacyl-sn-glycero-3-phosphoethanolamine + CoA. The enzyme catalyses a 1-O-(1Z-alkenyl)-sn-glycero-3-phosphoethanolamine + an acyl-CoA = a 1-O-(1Z-alkenyl)-2-acyl-sn-glycero-3-phosphoethanolamine + CoA. The catalysed reaction is a 1-acyl-sn-glycero-3-phosphocholine + an acyl-CoA = a 1,2-diacyl-sn-glycero-3-phosphocholine + CoA. It catalyses the reaction a 1-O-alkyl-sn-glycero-3-phosphocholine + acetyl-CoA = a 1-O-alkyl-2-acetyl-sn-glycero-3-phosphocholine + CoA. It carries out the reaction a 1-acyl-sn-glycero-3-phospho-L-serine + an acyl-CoA = a 1,2-diacyl-sn-glycero-3-phospho-L-serine + CoA. The enzyme catalyses octanoyl-CoA + a 1-acyl-sn-glycero-3-phosphoethanolamine = 1-acyl-2-octanoyl-sn-glycero-3-phosphoethanolamine + CoA. The catalysed reaction is a 1-acyl-sn-glycero-3-phosphoethanolamine + hexadecanoyl-CoA = 1-acyl-2-hexadecanoyl-sn-glycero-3-phosphoethanolamine + CoA. It catalyses the reaction a 1-acyl-sn-glycero-3-phosphoethanolamine + octadecanoyl-CoA = 1-acyl-2-octadecanoyl-sn-glycero-3-phosphoethanolamine + CoA. It carries out the reaction a 1-acyl-sn-glycero-3-phosphoethanolamine + (9Z)-octadecenoyl-CoA = 1-acyl-2-(9Z)-octadecenoyl-sn-glycero-3-phosphoethanolamine + CoA. The enzyme catalyses a 1-acyl-sn-glycero-3-phosphoethanolamine + (5Z,8Z,11Z,14Z)-eicosatetraenoyl-CoA = 1-acyl-2-(5Z,8Z,11Z,14Z)-eicosatetraenoyl-sn-glycero-3-phosphoethanolamine + CoA. The catalysed reaction is a 1-O-(1Z-alkenyl)-sn-glycero-3-phosphoethanolamine + octanoyl-CoA = 1-O-(1Z)-alkenyl-2-octanoyl-sn-glycero-3-phosphoethanolamine + CoA. It catalyses the reaction a 1-O-(1Z-alkenyl)-sn-glycero-3-phosphoethanolamine + hexadecanoyl-CoA = 1-O-(1Z)-alkenyl-2-hexadecanoyl-sn-glycero-3-phosphoethanolamine + CoA. It carries out the reaction a 1-O-(1Z-alkenyl)-sn-glycero-3-phosphoethanolamine + octadecanoyl-CoA = 1-O-(1Z)-alkenyl-2-octadecanoyl-sn-glycero-3-phosphoethanolamine + CoA. The enzyme catalyses a 1-O-(1Z-alkenyl)-sn-glycero-3-phosphoethanolamine + (9Z)-octadecenoyl-CoA = 1-O-(1Z)-alkenyl-2-(9Z)-octadecenoyl-sn-glycero-3-phosphoethanolamine + CoA. The catalysed reaction is a 1-O-(1Z-alkenyl)-sn-glycero-3-phosphoethanolamine + (5Z,8Z,11Z,14Z)-eicosatetraenoyl-CoA = 1-O-(1Z)-alkenyl-2-(5Z,8Z,11Z,14Z)-eicosatetraenoyl-sn-glycero-3-phosphoethanolamine + CoA. It catalyses the reaction a 1-acyl-sn-glycero-3-phosphocholine + hexadecanoyl-CoA = 1-acyl-2-hexadecanoyl-sn-glycero-3-phosphocholine + CoA. It carries out the reaction a 1-acyl-sn-glycero-3-phosphocholine + (9Z)-octadecenoyl-CoA = a 1-acyl-2-(9Z)-octadecenoyl-sn-glycero-3-phosphocholine + CoA. The enzyme catalyses 1-O-hexadecyl-sn-glycero-3-phosphocholine + (9Z)-octadecenoyl-CoA = 1-O-hexadecyl-2-(9Z)-octadecenoyl-sn-glycero-3-phosphocholine + CoA. The catalysed reaction is 1-O-hexadecyl-sn-glycero-3-phosphocholine + (5Z,8Z,11Z,14Z)-eicosatetraenoyl-CoA = 1-O-hexadecyl-2-(5Z,8Z,11Z,14Z)-eicosatetraenoyl-sn-glycero-3-phosphocholine + CoA. It catalyses the reaction 1-hexadecanoyl-sn-glycero-3-phospho-L-serine + (9Z)-octadecenoyl-CoA = 1-hexadecanoyl-2-(9Z-octadecenoyl)-sn-glycero-3-phospho-L-serine + CoA. It carries out the reaction 1-octadecanoyl-sn-glycero-3-phospho-(1'-sn-glycerol) + (9Z)-octadecenoyl-CoA = 1-octadecanoyl-2-(9Z-octadecenoyl)-sn-glycero-3-phospho-(1'-sn-glycerol) + CoA. The enzyme catalyses 1-octadecanoyl-sn-glycero-3-phospho-(1'-sn-glycerol) + (5Z,8Z,11Z,14Z)-eicosatetraenoyl-CoA = 1-octadecanoyl-2-(5Z,8Z,11Z,14Z-eicosatetraenoyl)-sn-glycero-3-phospho-(1'-sn-glycerol) + CoA. Its pathway is lipid metabolism; phospholipid metabolism. Functionally, displays acyl-CoA-dependent lysophospholipid acyltransferase activity with a subset of lysophospholipids as substrates; converts lysophosphatidylethanolamine to phosphatidylethanolamine, lysophosphatidylcholine to phosphatidycholine, 1-alkenyl-lysophatidylethanolamine to 1-alkenyl-phosphatidylethanolamine, lysophosphatidylglycerol and alkyl-lysophosphatidylcholine to phosphatidylglycerol and alkyl-phosphatidylcholine, respectively. In contrast, has no lysophosphatidylinositol, glycerol-3-phosphate, diacylglycerol or lysophosphatidic acid acyltransferase activity. Prefers long chain acyl-CoAs (C16, C18) as acyl donors. The sequence is that of Lysophospholipid acyltransferase LPCAT4 (LPCAT4) from Homo sapiens (Human).